The sequence spans 126 residues: Aspartate 1-decarboxylase (126 aa).

Serine 25 (schiff-base intermediate with substrate; via pyruvic acid) is an active-site residue. Position 25 is a pyruvic acid (Ser) (serine 25). Threonine 57 is a substrate binding site. Tyrosine 58 serves as the catalytic Proton donor. 73–75 lines the substrate pocket; it reads GAA.

This sequence belongs to the PanD family. In terms of assembly, heterooctamer of four alpha and four beta subunits. Pyruvate serves as cofactor. Is synthesized initially as an inactive proenzyme, which is activated by self-cleavage at a specific serine bond to produce a beta-subunit with a hydroxyl group at its C-terminus and an alpha-subunit with a pyruvoyl group at its N-terminus.

The protein localises to the cytoplasm. It carries out the reaction L-aspartate + H(+) = beta-alanine + CO2. The protein operates within cofactor biosynthesis; (R)-pantothenate biosynthesis; beta-alanine from L-aspartate: step 1/1. Its function is as follows. Catalyzes the pyruvoyl-dependent decarboxylation of aspartate to produce beta-alanine. This chain is Aspartate 1-decarboxylase, found in Salmonella dublin (strain CT_02021853).